The chain runs to 779 residues: Ribosome-releasing factor 2, mitochondrial (779 aa).

Positions 68 to 353 constitute a tr-type G domain; the sequence is AKIRNIGIMA…AVTTYLPSPE (286 aa). GTP is bound by residues 77–84, 141–145, and 195–198; these read AHIDAGKT, DTPGH, and NKMD.

This sequence belongs to the TRAFAC class translation factor GTPase superfamily. Classic translation factor GTPase family. EF-G/EF-2 subfamily.

Its subcellular location is the mitochondrion. The enzyme catalyses GTP + H2O = GDP + phosphate + H(+). Functionally, mitochondrial GTPase that mediates the disassembly of ribosomes from messenger RNA at the termination of mitochondrial protein biosynthesis. Acts in collaboration with MRRF. GTP hydrolysis follows the ribosome disassembly and probably occurs on the ribosome large subunit. Not involved in the GTP-dependent ribosomal translocation step during translation elongation. The protein is Ribosome-releasing factor 2, mitochondrial (Gfm2) of Rattus norvegicus (Rat).